A 111-amino-acid chain; its full sequence is uncharacterized protein (111 aa).

3 helical membrane passes run 4-23 (LHQVLIACVIGGIMGILGHV), 39-61 (IYLGFLEDWFIGMTASILLVLSA), and 65-84 (SGIQLVILSIISGYGGEAVL).

It is found in the cell membrane. This is an uncharacterized protein from Bacillus subtilis (strain 168).